Here is a 1288-residue protein sequence, read N- to C-terminus: Probable serine/threonine-protein kinase drkD (1288 aa).

Polar residues predominate over residues 1 to 12 (MEGSFQFNKSKQ). Disordered stretches follow at residues 1–132 (MEGS…QYHP), 156–223 (FNVS…PEEI), and 269–386 (SFGH…DDEE). 2 stretches are compositionally biased toward low complexity: residues 13–79 (TNNN…NSTS) and 156–220 (FNVS…QQQP). A coiled-coil region spans residues 221–248 (EEIEGELNRERQERDKMLHEEAEIEQYK). A compositionally biased stretch (polar residues) spans 271 to 291 (GHITSANSDETTNNESGSPIN). Residues 302–343 (PHSSHNEDHQSDQDNHGQFMNDEHQSTDDDQNKSDNEKESES) show a composition bias toward basic and acidic residues. Residues 344 to 354 (ARNSGDLQQKV) show a composition bias toward polar residues. Over residues 376 to 386 (EGEEEDDDDEE) the composition is skewed to acidic residues. 7 LRR repeats span residues 400 to 421 (KSTK…VWSI), 423 to 444 (ELRD…IGLL), 446 to 468 (HLKR…YSLP), 469 to 490 (RLTT…INRL), 492 to 513 (SLKT…TNLH), 517 to 538 (NLVE…MLES), and 540 to 561 (HLQV…LKKS). Disordered regions lie at residues 690 to 717 (WDQQ…VLTG), 733 to 764 (PTQQ…QQQQ), and 796 to 825 (QQQQ…KDHQ). Composition is skewed to polar residues over residues 701-717 (SPNV…VLTG) and 733-757 (PTQQ…HNNN). A Protein kinase domain is found at 851–1104 (IAIGARIGRG…EILPIMEGMI (254 aa)). Residues 857-865 (IGRGGYGQV) and lysine 878 contribute to the ATP site. Aspartate 974 functions as the Proton acceptor in the catalytic mechanism. Disordered stretches follow at residues 1118 to 1141 (GRPI…QNMA) and 1245 to 1288 (QQQL…NDKK). A compositionally biased stretch (low complexity) spans 1257–1268 (NRLNYNFNNSNN). Over residues 1269–1282 (SDIQPMQQENNYRM) the composition is skewed to polar residues.

It belongs to the protein kinase superfamily. TKL Ser/Thr protein kinase family.

It carries out the reaction L-seryl-[protein] + ATP = O-phospho-L-seryl-[protein] + ADP + H(+). It catalyses the reaction L-threonyl-[protein] + ATP = O-phospho-L-threonyl-[protein] + ADP + H(+). This chain is Probable serine/threonine-protein kinase drkD (drkD), found in Dictyostelium discoideum (Social amoeba).